The chain runs to 164 residues: MPLLDSFKVDHTKMPAPAVRLAKVMKTPKGDDISVFDLRFCIPNKDIMSEKGTHTLEHLFAGFMRDHLNSNSVEIIDISPMGCRTGFYMSLIGTPDEKSIAKAWEAAMKDVLSVSDQSKIPELNIYQCGTCAMHSLDEAKQIAQKVLNLGISIINNKELKLENA.

Fe cation-binding residues include His-54, His-58, and Cys-128.

The protein belongs to the LuxS family. In terms of assembly, homodimer. Fe cation serves as cofactor.

The catalysed reaction is S-(5-deoxy-D-ribos-5-yl)-L-homocysteine = (S)-4,5-dihydroxypentane-2,3-dione + L-homocysteine. Functionally, involved in the synthesis of autoinducer 2 (AI-2) which is secreted by bacteria and is used to communicate both the cell density and the metabolic potential of the environment. The regulation of gene expression in response to changes in cell density is called quorum sensing. Catalyzes the transformation of S-ribosylhomocysteine (RHC) to homocysteine (HC) and 4,5-dihydroxy-2,3-pentadione (DPD). This Campylobacter jejuni subsp. jejuni serotype O:2 (strain ATCC 700819 / NCTC 11168) protein is S-ribosylhomocysteine lyase.